A 435-amino-acid polypeptide reads, in one-letter code: Putative BTB/POZ domain-containing protein L275 (435 aa).

The BTB domain maps to 80–149 (YDGYVYINVG…IKGKQNDNHN (70 aa)).

This sequence belongs to the mimivirus BTB/WD family.

This Acanthamoeba polyphaga mimivirus (APMV) protein is Putative BTB/POZ domain-containing protein L275.